The sequence spans 282 residues: ATP phosphoribosyltransferase (282 aa).

It belongs to the ATP phosphoribosyltransferase family. Long subfamily. It depends on Mg(2+) as a cofactor.

Its subcellular location is the cytoplasm. It catalyses the reaction 1-(5-phospho-beta-D-ribosyl)-ATP + diphosphate = 5-phospho-alpha-D-ribose 1-diphosphate + ATP. It participates in amino-acid biosynthesis; L-histidine biosynthesis; L-histidine from 5-phospho-alpha-D-ribose 1-diphosphate: step 1/9. Its activity is regulated as follows. Feedback inhibited by histidine. Functionally, catalyzes the condensation of ATP and 5-phosphoribose 1-diphosphate to form N'-(5'-phosphoribosyl)-ATP (PR-ATP). Has a crucial role in the pathway because the rate of histidine biosynthesis seems to be controlled primarily by regulation of HisG enzymatic activity. This Halobacterium salinarum (strain ATCC 29341 / DSM 671 / R1) protein is ATP phosphoribosyltransferase.